The sequence spans 212 residues: Thymidylate kinase (212 aa).

10-17 (GPDGSGKS) contacts ATP.

This sequence belongs to the thymidylate kinase family.

It carries out the reaction dTMP + ATP = dTDP + ADP. Phosphorylation of dTMP to form dTDP in both de novo and salvage pathways of dTTP synthesis. In Exiguobacterium sp. (strain ATCC BAA-1283 / AT1b), this protein is Thymidylate kinase.